The sequence spans 315 residues: Homoserine kinase (315 aa).

Residue 96 to 106 (PHSRGLGSSAA) participates in ATP binding.

This sequence belongs to the GHMP kinase family. Homoserine kinase subfamily.

The protein localises to the cytoplasm. The catalysed reaction is L-homoserine + ATP = O-phospho-L-homoserine + ADP + H(+). The protein operates within amino-acid biosynthesis; L-threonine biosynthesis; L-threonine from L-aspartate: step 4/5. In terms of biological role, catalyzes the ATP-dependent phosphorylation of L-homoserine to L-homoserine phosphate. This is Homoserine kinase from Mycobacterium leprae (strain Br4923).